A 340-amino-acid polypeptide reads, in one-letter code: Dihydroorotate dehydrogenase (quinone) (340 aa).

Residues 61–65 (AGLDK) and Thr85 each bind FMN. A substrate-binding site is contributed by Lys65. 110-114 (NRMGF) is a binding site for substrate. Residues Asn138 and Asn171 each contribute to the FMN site. Asn171 contributes to the substrate binding site. Ser174 acts as the Nucleophile in catalysis. Substrate is bound at residue Asn176. FMN-binding residues include Lys216 and Thr244. Position 245-246 (245-246 (NT)) interacts with substrate. FMN contacts are provided by residues Gly267, Gly296, and 317–318 (YS).

It belongs to the dihydroorotate dehydrogenase family. Type 2 subfamily. In terms of assembly, monomer. It depends on FMN as a cofactor.

Its subcellular location is the cell membrane. It catalyses the reaction (S)-dihydroorotate + a quinone = orotate + a quinol. It functions in the pathway pyrimidine metabolism; UMP biosynthesis via de novo pathway; orotate from (S)-dihydroorotate (quinone route): step 1/1. In terms of biological role, catalyzes the conversion of dihydroorotate to orotate with quinone as electron acceptor. This is Dihydroorotate dehydrogenase (quinone) from Pseudomonas putida (strain ATCC 47054 / DSM 6125 / CFBP 8728 / NCIMB 11950 / KT2440).